Consider the following 273-residue polypeptide: 1,4-dihydroxy-2-naphthoyl-CoA synthase (273 aa).

Substrate-binding positions include arginine 34, 73 to 77, tyrosine 85, 117 to 121, threonine 143, serine 149, tyrosine 246, and lysine 261; these read SGGDQ and YAVGG. 142–144 serves as a coordination point for hydrogencarbonate; the sequence is QTG. Residues 254-265 show a composition bias toward basic and acidic residues; it reads GRDAFKEKRDPD. Residues 254–273 form a disordered region; that stretch reads GRDAFKEKRDPDFDQFPKFP.

Belongs to the enoyl-CoA hydratase/isomerase family. MenB subfamily. Requires hydrogencarbonate as cofactor.

It carries out the reaction 2-succinylbenzoyl-CoA + H(+) = 1,4-dihydroxy-2-naphthoyl-CoA + H2O. It functions in the pathway quinol/quinone metabolism; 1,4-dihydroxy-2-naphthoate biosynthesis; 1,4-dihydroxy-2-naphthoate from chorismate: step 6/7. It participates in quinol/quinone metabolism; menaquinone biosynthesis. Functionally, converts o-succinylbenzoyl-CoA (OSB-CoA) to 1,4-dihydroxy-2-naphthoyl-CoA (DHNA-CoA). In Staphylococcus aureus (strain Mu50 / ATCC 700699), this protein is 1,4-dihydroxy-2-naphthoyl-CoA synthase.